A 252-amino-acid polypeptide reads, in one-letter code: Trans-aconitate 2-methyltransferase (252 aa).

The protein belongs to the methyltransferase superfamily. Tam family.

The protein resides in the cytoplasm. The enzyme catalyses trans-aconitate + S-adenosyl-L-methionine = (E)-3-(methoxycarbonyl)pent-2-enedioate + S-adenosyl-L-homocysteine. Functionally, catalyzes the S-adenosylmethionine monomethyl esterification of trans-aconitate. This Escherichia coli O17:K52:H18 (strain UMN026 / ExPEC) protein is Trans-aconitate 2-methyltransferase.